Here is a 629-residue protein sequence, read N- to C-terminus: tRNA uridine 5-carboxymethylaminomethyl modification enzyme MnmG (629 aa).

Residues 13 to 18, Val125, and Ser180 contribute to the FAD site; that span reads GGGHAG. Residue 273–287 participates in NAD(+) binding; it reads GPRYCPSIEDKVMRF. Gln370 is an FAD binding site.

Belongs to the MnmG family. In terms of assembly, homodimer. Heterotetramer of two MnmE and two MnmG subunits. It depends on FAD as a cofactor.

It is found in the cytoplasm. Its function is as follows. NAD-binding protein involved in the addition of a carboxymethylaminomethyl (cmnm) group at the wobble position (U34) of certain tRNAs, forming tRNA-cmnm(5)s(2)U34. This chain is tRNA uridine 5-carboxymethylaminomethyl modification enzyme MnmG, found in Serratia proteamaculans (strain 568).